The sequence spans 98 residues: Ribonuclease kappa (98 aa).

Helical transmembrane passes span 13–33 and 65–85; these read ACGIVLSAWGVIMLIMLGIFF and VSYNCFIAAGLYLLLGGFSFC.

It belongs to the RNase K family. As to quaternary structure, interacts with the proton translocation complex V0 of the V-ATPase. Interacts with ATP6AP1.

Its subcellular location is the endomembrane system. It is found in the cytoplasmic vesicle. The protein localises to the clathrin-coated vesicle membrane. Endoribonuclease which preferentially cleaves ApU and ApG phosphodiester bonds. Hydrolyzes UpU bonds at a lower rate. Regulates the activity of vacuolar (H+)-ATPase (V-ATPase) which is responsible for acidifying and maintaining the pH of intracellular compartments. Required at an early stage of receptor-mediated endocytosis. The chain is Ribonuclease kappa (Rnasek) from Mus musculus (Mouse).